The chain runs to 90 residues: Progonadoliberin-1 (90 aa).

The first 21 residues, 1–21 (MILKLMAGILLLTVCLEGCSS), serve as a signal peptide directing secretion. At glutamine 22 the chain carries Pyrrolidone carboxylic acid. Glycine 31 bears the Glycine amide mark.

Belongs to the GnRH family. In terms of processing, the precursor is cleaved by ACE, which removes the Gly-Lys-Arg peptide at the C-terminus, leading to mature hormone. The mature form of Gonadoliberin-1 is also cleaved and degraded by ACE.

The protein resides in the secreted. Stimulates the secretion of gonadotropins; it stimulates the secretion of both luteinizing and follicle-stimulating hormones. This is Progonadoliberin-1 (Gnrh1) from Mus musculus (Mouse).